Reading from the N-terminus, the 458-residue chain is UDP-N-acetylmuramoylalanine--D-glutamate ligase (458 aa).

124–130 (GSDGKTT) lines the ATP pocket.

The protein belongs to the MurCDEF family.

It localises to the cytoplasm. It carries out the reaction UDP-N-acetyl-alpha-D-muramoyl-L-alanine + D-glutamate + ATP = UDP-N-acetyl-alpha-D-muramoyl-L-alanyl-D-glutamate + ADP + phosphate + H(+). The protein operates within cell wall biogenesis; peptidoglycan biosynthesis. Functionally, cell wall formation. Catalyzes the addition of glutamate to the nucleotide precursor UDP-N-acetylmuramoyl-L-alanine (UMA). This Clostridium tetani (strain Massachusetts / E88) protein is UDP-N-acetylmuramoylalanine--D-glutamate ligase.